Reading from the N-terminus, the 677-residue chain is Methionine--tRNA ligase (677 aa).

The short motif at 15–25 (PYANGSIHLGH) is the 'HIGH' region element. Zn(2+)-binding residues include C146, C149, C159, and C162. A 'KMSKS' region motif is present at residues 333–337 (KMSKS). K336 serves as a coordination point for ATP. The tRNA-binding domain maps to 575-677 (DFAKIDLRVA…DGAKPGQQVK (103 aa)).

The protein belongs to the class-I aminoacyl-tRNA synthetase family. MetG type 1 subfamily. Homodimer. It depends on Zn(2+) as a cofactor.

It is found in the cytoplasm. The enzyme catalyses tRNA(Met) + L-methionine + ATP = L-methionyl-tRNA(Met) + AMP + diphosphate. In terms of biological role, is required not only for elongation of protein synthesis but also for the initiation of all mRNA translation through initiator tRNA(fMet) aminoacylation. The sequence is that of Methionine--tRNA ligase from Salmonella agona (strain SL483).